We begin with the raw amino-acid sequence, 112 residues long: Signal recognition particle 19 kDa protein (112 aa).

It belongs to the SRP19 family. Part of the signal recognition particle protein translocation system, which is composed of SRP and FtsY. Archaeal SRP consists of a 7S RNA molecule of 300 nucleotides and two protein subunits: SRP54 and SRP19.

Its subcellular location is the cytoplasm. In terms of biological role, involved in targeting and insertion of nascent membrane proteins into the cytoplasmic membrane. Binds directly to 7S RNA and mediates binding of the 54 kDa subunit of the SRP. The polypeptide is Signal recognition particle 19 kDa protein (Aeropyrum pernix (strain ATCC 700893 / DSM 11879 / JCM 9820 / NBRC 100138 / K1)).